Consider the following 169-residue polypeptide: Inorganic pyrophosphatase (169 aa).

M1 is subject to N-formylmethionine. Substrate is bound by residues K28, R42, and Y54. Residues D64, D69, and D101 each coordinate Mg(2+). Y138 is a binding site for substrate.

Belongs to the PPase family. In terms of assembly, homohexamer. Mg(2+) serves as cofactor.

It localises to the cytoplasm. The enzyme catalyses diphosphate + H2O = 2 phosphate + H(+). Its activity is regulated as follows. Inhibited by ATP, but not by fructose 1,6-bisphosphate or 2-phosphoglycerate. Hydrolyzes PPi generated in anabolic reactions. Functionally, catalyzes the hydrolysis of inorganic pyrophosphate (PPi) forming two phosphate ions. The protein is Inorganic pyrophosphatase of Synechocystis sp. (strain ATCC 27184 / PCC 6803 / Kazusa).